A 127-amino-acid chain; its full sequence is Glycine cleavage system H protein 1 (127 aa).

One can recognise a Lipoyl-binding domain in the interval 20-101; it reads SVTVGITPYA…LGAGWFFRFI (82 aa). K60 carries the N6-lipoyllysine modification.

It belongs to the GcvH family. In terms of assembly, the glycine cleavage system is composed of four proteins: P, T, L and H. The cofactor is (R)-lipoate.

The glycine cleavage system catalyzes the degradation of glycine. The H protein shuttles the methylamine group of glycine from the P protein to the T protein. In Pseudomonas syringae pv. tomato (strain ATCC BAA-871 / DC3000), this protein is Glycine cleavage system H protein 1.